The following is a 340-amino-acid chain: Ava biosynthesis cluster protein G (340 aa).

4 helical membrane-spanning segments follow: residues 15 to 35 (WSAF…NIWN), 81 to 101 (FMIS…LQFV), 118 to 138 (AFFV…VHAF), and 148 to 168 (LSIM…FLCI). N-linked (GlcNAc...) asparagine glycosylation occurs at N171. Helical transmembrane passes span 219–239 (FSSV…YVAF) and 315–335 (SALT…WLQI).

The protein localises to the membrane. The protein operates within secondary metabolite biosynthesis. In terms of biological role, part of the cluster that mediates the biosynthesis of a highly modified cyclo-arginine-tryptophan dipeptide (cRW). The first step of the pathway is perfornmed by the arginine-containing cyclodipeptide synthase (RCPDS) avaA that acts as the scaffold-generating enzyme and is responsible for formation of the cyclo-Arg-Trp (cRW) diketopiperazine. AvaB then acts as a multifunctional flavoenzyme that is responsible for generating the cyclo-Arg-formylkynurenine DKP, which can be deformylated by avaC. AvaB then further catalyzes an additional N-oxidation followed by cyclization and dehydration. The next step is an N-acetylation of the guanidine group catalyzed by the arginine N-acetyltransferase avaD. The roles of the additional enzymes identified within the ava cluster still have to be determined. The polypeptide is Ava biosynthesis cluster protein G (Aspergillus versicolor).